A 495-amino-acid polypeptide reads, in one-letter code: 3-octaprenyl-4-hydroxybenzoate carboxy-lyase (495 aa).

Asn-171 lines the Mn(2+) pocket. Residues 174–176, 188–190, and 193–194 contribute to the prenylated FMN site; these read IYR, RWL, and RG. A Mn(2+)-binding site is contributed by Glu-237. Asp-286 acts as the Proton donor in catalysis.

This sequence belongs to the UbiD family. As to quaternary structure, homohexamer. The cofactor is prenylated FMN. Requires Mn(2+) as cofactor.

The protein localises to the cell membrane. It catalyses the reaction a 4-hydroxy-3-(all-trans-polyprenyl)benzoate + H(+) = a 2-(all-trans-polyprenyl)phenol + CO2. Its pathway is cofactor biosynthesis; ubiquinone biosynthesis. Its function is as follows. Catalyzes the decarboxylation of 3-octaprenyl-4-hydroxy benzoate to 2-octaprenylphenol, an intermediate step in ubiquinone biosynthesis. This Hamiltonella defensa subsp. Acyrthosiphon pisum (strain 5AT) protein is 3-octaprenyl-4-hydroxybenzoate carboxy-lyase.